A 190-amino-acid polypeptide reads, in one-letter code: UPF0200 protein MTH_434 (190 aa).

Position 10–17 (10–17 (GMPGAGKG)) interacts with ATP.

It belongs to the UPF0200 family.

This Methanothermobacter thermautotrophicus (strain ATCC 29096 / DSM 1053 / JCM 10044 / NBRC 100330 / Delta H) (Methanobacterium thermoautotrophicum) protein is UPF0200 protein MTH_434.